A 221-amino-acid chain; its full sequence is MEVLDRRDDEIRDSGNMDSIKSHYVTDSVSEERRSRELKDGDHPLRYKFSIWYTRRTPGVRNQSYEDNIKKMVEFSTVEGFWACYCHLARSSLLPSPTDLHFFKDGIRPLWEDGANCNGGKWIIRFSKVVSARFWEDLLLALVGDQLDDADNICGAVLSVRFNEDIISVWNRNASDHQAVMGLRDSIKRHLKLPHAYVMEYKPHDASLRDNSSYRNTWLRG.

It belongs to the eukaryotic initiation factor 4E family. In terms of assembly, EIF4F is a multi-subunit complex, the composition of which varies with external and internal environmental conditions. It is composed of at least EIF4A, EIF4E and EIF4G. EIF4E is also known to interact with other partners. In higher plants two isoforms of EIF4F have been identified, named isoform EIF4F and isoform EIF(iso)4F. Isoform EIF4F has subunits p220 and p26, whereas isoform EIF(iso)4F has subunits p82 and p28.

Its function is as follows. Recognizes and binds the 7-methylguanosine-containing mRNA cap during an early step in the initiation of protein synthesis and facilitates ribosome binding by inducing the unwinding of the mRNAs secondary structures. The sequence is that of Eukaryotic translation initiation factor NCBP (NCBP) from Arabidopsis thaliana (Mouse-ear cress).